Consider the following 1062-residue polypeptide: Translation initiation factor IF-2 (1062 aa).

The segment at 34-463 is disordered; that stretch reads SASSTVEAPV…RMGAMVPRGN (430 aa). Positions 76-121 are enriched in pro residues; sequence PTPPSRPGLAPRPGPRPVPGRPGPLGRPGPATPAPSPSPASPPLPA. A compositionally biased stretch (low complexity) spans 122–153; it reads SPVQASPVQASPVQASPTSAPAAPRPAAASAV. Positions 154–178 are enriched in pro residues; sequence PAPPMPSVPSAPSGPRPGPNAPRPG. A compositionally biased stretch (gly residues) spans 198 to 214; that stretch reads TAGGPTAGGPTAGGPTA. A compositionally biased stretch (pro residues) spans 294-305; it reads RPTPGGMPPRPG. 2 stretches are compositionally biased toward gly residues: residues 307–324 and 344–430; these read PRSG…GTGG and PGGG…GGRG. Basic residues predominate over residues 431 to 442; that stretch reads RPGRQRKSKRAK. A tr-type G domain is found at 555–727; it reads SRPPVVTVMG…IVLTADASLD (173 aa). Residues 564–571 are G1; it reads GHVDHGKT. Residue 564–571 coordinates GTP; the sequence is GHVDHGKT. The interval 589–593 is G2; sequence GITQH. Residues 614 to 617 are G3; that stretch reads DTPG. GTP contacts are provided by residues 614–618 and 668–671; these read DTPGH and NKVD. The segment at 668-671 is G4; sequence NKVD. The G5 stretch occupies residues 704–706; sequence SAR.

This sequence belongs to the TRAFAC class translation factor GTPase superfamily. Classic translation factor GTPase family. IF-2 subfamily.

The protein localises to the cytoplasm. Functionally, one of the essential components for the initiation of protein synthesis. Protects formylmethionyl-tRNA from spontaneous hydrolysis and promotes its binding to the 30S ribosomal subunits. Also involved in the hydrolysis of GTP during the formation of the 70S ribosomal complex. The polypeptide is Translation initiation factor IF-2 (Frankia casuarinae (strain DSM 45818 / CECT 9043 / HFP020203 / CcI3)).